The following is a 443-amino-acid chain: Na(+)-translocating ferredoxin:NAD(+) oxidoreductase complex subunit C (443 aa).

2 4Fe-4S ferredoxin-type domains span residues 359–391 (ESAK…IAEY) and 398–428 (DKCE…VSSI). Residues C369, C372, C375, C379, C408, C411, C414, and C418 each contribute to the [4Fe-4S] cluster site.

It belongs to the 4Fe4S bacterial-type ferredoxin family. RnfC subfamily. The complex is composed of six subunits: RnfA, RnfB, RnfC, RnfD, RnfE and RnfG. [4Fe-4S] cluster is required as a cofactor.

Its subcellular location is the cell membrane. The catalysed reaction is 2 reduced [2Fe-2S]-[ferredoxin] + Na(+)(in) + NAD(+) + H(+) = 2 oxidized [2Fe-2S]-[ferredoxin] + Na(+)(out) + NADH. Its function is as follows. Part of a membrane-bound complex that couples electron transfer with translocation of ions across the membrane. Couples electron transfer from reduced ferredoxin to NAD(+) with electrogenic movement of Na(+) out of the cell. Involved in caffeate respiration. The sequence is that of Na(+)-translocating ferredoxin:NAD(+) oxidoreductase complex subunit C from Acetobacterium woodii (strain ATCC 29683 / DSM 1030 / JCM 2381 / KCTC 1655 / WB1).